The chain runs to 339 residues: Cathepsin B (339 aa).

An N-terminal signal peptide occupies residues 1–17 (MWQLWASLCCLLALADA). Residues 18–79 (RSRPSFHPLS…QRVMFTEDLK (62 aa)) constitute a propeptide, activation peptide. Cystine bridges form between cysteine 93–cysteine 122, cysteine 105–cysteine 150, cysteine 141–cysteine 207, cysteine 142–cysteine 146, cysteine 179–cysteine 211, and cysteine 187–cysteine 198. Cysteine 108 is an active-site residue. An N-linked (GlcNAc...) asparagine glycan is attached at asparagine 192. Position 220 is an N6-acetyllysine (lysine 220). Active-site residues include histidine 278 and asparagine 298. The propeptide occupies 334 to 339 (QYWEKI).

Belongs to the peptidase C1 family. Dimer of a heavy chain and a light chain cross-linked by a disulfide bond. Interacts with SRPX2. Directly interacts with SHKBP1.

It localises to the lysosome. It is found in the melanosome. The protein localises to the secreted. The protein resides in the extracellular space. Its subcellular location is the apical cell membrane. It catalyses the reaction Hydrolysis of proteins with broad specificity for peptide bonds. Preferentially cleaves -Arg-Arg-|-Xaa bonds in small molecule substrates (thus differing from cathepsin L). In addition to being an endopeptidase, shows peptidyl-dipeptidase activity, liberating C-terminal dipeptides.. Thiol protease which is believed to participate in intracellular degradation and turnover of proteins. Cleaves matrix extracellular phosphoglycoprotein MEPE. Involved in the solubilization of cross-linked TG/thyroglobulin in the thyroid follicle lumen. Has also been implicated in tumor invasion and metastasis. In Pongo abelii (Sumatran orangutan), this protein is Cathepsin B (CTSB).